Here is a 129-residue protein sequence, read N- to C-terminus: Small ribosomal subunit protein uS11 (129 aa).

Belongs to the universal ribosomal protein uS11 family. In terms of assembly, part of the 30S ribosomal subunit.

In terms of biological role, located on the platform of the 30S subunit. This chain is Small ribosomal subunit protein uS11, found in Haloarcula marismortui (strain ATCC 43049 / DSM 3752 / JCM 8966 / VKM B-1809) (Halobacterium marismortui).